The sequence spans 968 residues: Angiomotin-like protein 1 (968 aa).

Polar residues-rich tracts occupy residues 152–164 and 177–187; these read VYQS…QGQE and RSTQPQQNNEE. The interval 152-258 is disordered; the sequence is VYQSARQEPQ…NRANSGQAHK (107 aa). Positions 203-224 are enriched in low complexity; it reads GQQQQQQQQQQQQQQQQQQGQG. Residues serine 253, serine 281, and serine 307 each carry the phosphoserine modification. Residues 271 to 291 adopt a coiled-coil conformation; it reads RSLSERIMQLSLERNGAKQHL. The interval 285 to 343 is disordered; it reads NGAKQHLPSSGNGKSFKAGGEPSPAQPVCKALDPRGPPPEYPFKTKPMKSPVSKNQDHG. 2 coiled-coil regions span residues 449–645 and 676–705; these read VERA…RRLR and ALME…YLEE. Residues 721–742 are disordered; it reads AERDTTISNHSRNGSYGESSLE. Residues 726–738 show a composition bias toward polar residues; the sequence is TISNHSRNGSYGE. Residue serine 731 is modified to Phosphoserine. The stretch at 748-773 forms a coiled coil; the sequence is EEEEVVQANRRCQDMEYTIKNLHAKI. Positions 785-834 are disordered; the sequence is QRSRKDAGKTDSASLRPARSVPSIAAATGTHSRQTSLTSSQLTEEKKEEK. A phosphoserine mark is found at serine 804, serine 816, and serine 840. The segment covering 853–878 has biased composition (low complexity); it reads ASAPLLPTTPASALSLPASTTSASST. Positions 853–956 are disordered; the sequence is ASAPLLPTTP…GRVSNLLHKP (104 aa). Serine 912 and serine 918 each carry phosphoserine. Residues 965–968 carry the PDZ-binding motif; sequence EVLI.

Belongs to the angiomotin family. Polyubiquitinated by NEDD4, leading to proteasomal degradation. As to expression, expressed in exocrine glands, including pancreas, submandibular gland, lacrimal gland, parotid gland and sublingual gland (at protein level).

Its subcellular location is the cell junction. It is found in the tight junction. Inhibits the Wnt/beta-catenin signaling pathway, probably by recruiting CTNNB1 to recycling endosomes and hence preventing its translocation to the nucleus. In Mus musculus (Mouse), this protein is Angiomotin-like protein 1 (Amotl1).